The chain runs to 360 residues: Photosystem II protein D1 (360 aa).

The next 3 helical transmembrane spans lie at 29-46 (YVGWFGVIMIPTLLTATT), 118-133 (HFLLGVFCYLGRQWEL), and 142-156 (WICVAYSAPVSAATA). A chlorophyll a-binding site is contributed by His118. Tyr126 lines the pheophytin a pocket. Residues Asp170 and Glu189 each contribute to the [CaMn4O5] cluster site. Residues 197–218 (FHMLGVAGVFGGSLFSAMHGSL) form a helical membrane-spanning segment. His198 provides a ligand contact to chlorophyll a. Residues His215 and 264–265 (SF) each bind a quinone. His215 is a binding site for Fe cation. His272 serves as a coordination point for Fe cation. A helical transmembrane segment spans residues 274–288 (FLGAWPVIGIWFTAM). 4 residues coordinate [CaMn4O5] cluster: His332, Glu333, Asp342, and Ala344. Positions 345–360 (SGEQAPVALTAPAING) are excised as a propeptide.

The protein belongs to the reaction center PufL/M/PsbA/D family. As to quaternary structure, PSII is composed of 1 copy each of membrane proteins PsbA, PsbB, PsbC, PsbD, PsbE, PsbF, PsbH, PsbI, PsbJ, PsbK, PsbL, PsbM, PsbT, PsbX, PsbY, PsbZ, Psb30/Ycf12, peripheral proteins PsbO, CyanoQ (PsbQ), PsbU, PsbV and a large number of cofactors. It forms dimeric complexes. Requires The D1/D2 heterodimer binds P680, chlorophylls that are the primary electron donor of PSII, and subsequent electron acceptors. It shares a non-heme iron and each subunit binds pheophytin, quinone, additional chlorophylls, carotenoids and lipids. D1 provides most of the ligands for the Mn4-Ca-O5 cluster of the oxygen-evolving complex (OEC). There is also a Cl(-1) ion associated with D1 and D2, which is required for oxygen evolution. The PSII complex binds additional chlorophylls, carotenoids and specific lipids. as cofactor. In terms of processing, tyr-161 forms a radical intermediate that is referred to as redox-active TyrZ, YZ or Y-Z. C-terminally processed by CtpA; processing is essential to allow assembly of the oxygen-evolving complex and thus photosynthetic growth.

It localises to the cellular thylakoid membrane. The catalysed reaction is 2 a plastoquinone + 4 hnu + 2 H2O = 2 a plastoquinol + O2. Its function is as follows. Photosystem II (PSII) is a light-driven water:plastoquinone oxidoreductase that uses light energy to abstract electrons from H(2)O, generating O(2) and a proton gradient subsequently used for ATP formation. It consists of a core antenna complex that captures photons, and an electron transfer chain that converts photonic excitation into a charge separation. The D1/D2 (PsbA/PsbD) reaction center heterodimer binds P680, the primary electron donor of PSII as well as several subsequent electron acceptors. In Microcystis aeruginosa, this protein is Photosystem II protein D1.